A 316-amino-acid polypeptide reads, in one-letter code: Ribosomal RNA small subunit methyltransferase H (316 aa).

Residues 35–37, Asp55, Phe79, Asp101, and Gln108 contribute to the S-adenosyl-L-methionine site; that span reads GGH.

This sequence belongs to the methyltransferase superfamily. RsmH family.

It localises to the cytoplasm. The catalysed reaction is cytidine(1402) in 16S rRNA + S-adenosyl-L-methionine = N(4)-methylcytidine(1402) in 16S rRNA + S-adenosyl-L-homocysteine + H(+). Its function is as follows. Specifically methylates the N4 position of cytidine in position 1402 (C1402) of 16S rRNA. This chain is Ribosomal RNA small subunit methyltransferase H, found in Aliivibrio fischeri (strain ATCC 700601 / ES114) (Vibrio fischeri).